Reading from the N-terminus, the 143-residue chain is Large ribosomal subunit protein uL15 (143 aa).

Residues 1-52 (MELNTIQPADGAKHYKRRVGRGIGSGLGKTAGRGHKGQKSRSGGFHKVGFEG) form a disordered region. Positions 21-31 (RGIGSGLGKTA) are enriched in gly residues.

This sequence belongs to the universal ribosomal protein uL15 family. Part of the 50S ribosomal subunit.

Functionally, binds to the 23S rRNA. The polypeptide is Large ribosomal subunit protein uL15 (Herminiimonas arsenicoxydans).